The sequence spans 360 residues: Probable arginine kinase ZC434.8 (360 aa).

In terms of domain architecture, Phosphagen kinase N-terminal spans 10–92 (SIEEVYTKLQ…FNPVIEEYHN (83 aa)). 65–69 (GVGIY) serves as a coordination point for substrate. Residues 122 to 359 (FIVSTRIRCG…KKLIELEKAA (238 aa)) form the Phosphagen kinase C-terminal domain. ATP contacts are provided by residues 125 to 129 (STRIR) and histidine 189. Residue glutamate 229 participates in substrate binding. ATP is bound at residue arginine 233. Substrate is bound at residue cysteine 275. ATP is bound by residues 284 to 288 (RASVH), 312 to 317 (RGIHGE), and aspartate 327. Glutamate 317 contributes to the substrate binding site.

The protein belongs to the ATP:guanido phosphotransferase family.

The catalysed reaction is L-arginine + ATP = N(omega)-phospho-L-arginine + ADP + H(+). The chain is Probable arginine kinase ZC434.8 from Caenorhabditis elegans.